We begin with the raw amino-acid sequence, 224 residues long: Urease accessory protein UreF (224 aa).

This sequence belongs to the UreF family. As to quaternary structure, ureD, UreF and UreG form a complex that acts as a GTP-hydrolysis-dependent molecular chaperone, activating the urease apoprotein by helping to assemble the nickel containing metallocenter of UreC. The UreE protein probably delivers the nickel.

It is found in the cytoplasm. Functionally, required for maturation of urease via the functional incorporation of the urease nickel metallocenter. This chain is Urease accessory protein UreF, found in Pseudomonas fluorescens (strain SBW25).